Consider the following 340-residue polypeptide: Melanin-concentrating hormone receptor 2 (340 aa).

The Extracellular portion of the chain corresponds to 1–34 (MNPFHSSCWNTSAELSNKSWNKEFAYQTASAVDT). N10 and N17 each carry an N-linked (GlcNAc...) asparagine glycan. Residues 35 to 57 (VILPSMIGIICSTGLVGNILIVF) traverse the membrane as a helical segment. Residues 58–69 (TIIRSRKKTVPD) are Cytoplasmic-facing. A helical transmembrane segment spans residues 70–92 (IYICNLAVADLVHIIGMPFLIHQ). Residues 93–106 (WARGGEWVFGGPLC) are Extracellular-facing. The helical transmembrane segment at 107–129 (TIITSLDTCNQFACSAIMTVMSV) threads the bilayer. Over 130–149 (DRYFALVQPFRLTSWRTRYK) the chain is Cytoplasmic. Residues 150 to 172 (TIRINLGLWAASFILALPVWIYS) traverse the membrane as a helical segment. Residues 173–198 (KVIKFKDGVESCAFDLTSPDDVLWYT) lie on the Extracellular side of the membrane. Residues 199 to 221 (LYLTITTFFFPLPLILVCYILIL) form a helical membrane-spanning segment. The Cytoplasmic segment spans residues 222 to 252 (CYTWEMYQQNKDARCCNPSVPKQRVMKLTKM). Residues 253-272 (VLVLVAVFILSAAPYHVIQL) traverse the membrane as a helical segment. The Extracellular portion of the chain corresponds to 273-286 (VNLQMEQPTLAFYV). The helical transmembrane segment at 287–309 (GYYLSICLSYASSSINPFLYILL) threads the bilayer. Over 310–340 (SGNFQKRLPQIQRRVTDKEIKNMGNTLKSHF) the chain is Cytoplasmic.

Belongs to the G-protein coupled receptor 1 family.

Its subcellular location is the cell membrane. Its function is as follows. Receptor for melanin-concentrating hormone, coupled to G proteins that activate phosphoinositide hydrolysis. The chain is Melanin-concentrating hormone receptor 2 (MCHR2) from Macaca fascicularis (Crab-eating macaque).